The following is a 473-amino-acid chain: Glutamyl-tRNA reductase (473 aa).

Residues 49 to 52 (TCNR), Ser-109, 114 to 116 (ESQ), and Gln-120 contribute to the substrate site. The Nucleophile role is filled by Cys-50. The interval 196–215 (LDGGGVAAEGPRHAVTPEPP) is disordered. 226-231 (GAGAVG) is a binding site for NADP(+).

Belongs to the glutamyl-tRNA reductase family. In terms of assembly, homodimer.

The catalysed reaction is (S)-4-amino-5-oxopentanoate + tRNA(Glu) + NADP(+) = L-glutamyl-tRNA(Glu) + NADPH + H(+). It functions in the pathway porphyrin-containing compound metabolism; protoporphyrin-IX biosynthesis; 5-aminolevulinate from L-glutamyl-tRNA(Glu): step 1/2. Catalyzes the NADPH-dependent reduction of glutamyl-tRNA(Glu) to glutamate 1-semialdehyde (GSA). This chain is Glutamyl-tRNA reductase, found in Frankia casuarinae (strain DSM 45818 / CECT 9043 / HFP020203 / CcI3).